The sequence spans 686 residues: MVHDSTDDPDDTRVRKSRRGTALDAPPQETAPPDLDPATTGGDDEDDALLPDILEESGAVGEEPLASGHEAIERAVRLAPTSPGVYRMLNANADVLYVGKAKNVKKRLSNYARQSAPQPARILRMIAATVTVEIVSTNTETEALLLEANLIKQLRPRFNVQLRDDKSFPYILITGDHWAPQILKHRGAQTRPGRYFGPFASAGAVNRTITALQRAFLIRSCTDSFFESRSRPCLLYQIRRCAGPCTREIDFPGYTTLVREATDFLSGKSHAVKQELAGEMEKAANELEFETAALYRDRLAALSAIQSQQGINPRTVEEADVFAIHQEGGFSCVEVFFFRTGQNWGNRAYFPRAEKTFTPEEVLGSFLAQFYDDKPPPKNILLSHEIEESELLANALSIKAGHKIEVTAPKRGEKKELVAHALTNAREALGRKLADTATQGRLLDAMATTLSLPHAPKRIEVYDNSHIQGTNAVGAMIVAGPDGFVKNQYRKFNIKSEGLTPGDDYGMMREVLERRFKRLINPPEEGAKVKDDDFPQWPDLVIIDGGRGQLNAVREIFANLGLTQVSLMSVAKGPDRDAGRETLFMPEREAIKLEPRDPVLYFIQRLRDEAHRFVIGSHRKLRKKDIREAGLQEIPGIGPSRKRALLHHFGTLKEIERASIADLGKVPGVSAESARRIFEYFHPQPG.

A compositionally biased stretch (basic and acidic residues) spans 1–14 (MVHDSTDDPDDTRV). Residues 1–48 (MVHDSTDDPDDTRVRKSRRGTALDAPPQETAPPDLDPATTGGDDEDDA) are disordered. A GIY-YIG domain is found at 81 to 160 (TSPGVYRMLN…IKQLRPRFNV (80 aa)). The UVR domain occupies 270 to 305 (HAVKQELAGEMEKAANELEFETAALYRDRLAALSAI).

This sequence belongs to the UvrC family. In terms of assembly, interacts with UvrB in an incision complex.

The protein localises to the cytoplasm. In terms of biological role, the UvrABC repair system catalyzes the recognition and processing of DNA lesions. UvrC both incises the 5' and 3' sides of the lesion. The N-terminal half is responsible for the 3' incision and the C-terminal half is responsible for the 5' incision. The polypeptide is UvrABC system protein C (Bradyrhizobium diazoefficiens (strain JCM 10833 / BCRC 13528 / IAM 13628 / NBRC 14792 / USDA 110)).